Consider the following 666-residue polypeptide: SNARE-interacting protein KEULE (666 aa).

A coiled-coil region spans residues 340–377 (KNKAAQLQGKRDGAELSTRDLQKMVQALPQYSEQIDKL). Residues 534-589 (KEDFPCMNDPSPSFHGSTSLSSAASSSQGQAAQSMRSRRTPTWAKPRGSDDGYSSD) are disordered. A compositionally biased stretch (low complexity) spans 550–568 (STSLSSAASSSQGQAAQSM).

It belongs to the STXBP/unc-18/SEC1 family. Binds the syntaxin KNOLLE. Interacts with SEC6. As to expression, expressed throughout the plant, both in mitotically active and quiescent cells. Enriched in dividing tissues.

It localises to the cytoplasm. Its subcellular location is the membrane. The protein localises to the cytoskeleton. The protein resides in the phragmoplast. Functionally, regulator of vesicle trafficking involved in cytokinesis and root hair development, but not required for cell elongation. This is SNARE-interacting protein KEULE (KEU) from Arabidopsis thaliana (Mouse-ear cress).